A 419-amino-acid polypeptide reads, in one-letter code: Protein translocase subunit SecY (419 aa).

10 consecutive transmembrane segments (helical) span residues 19-39, 64-84, 113-133, 143-163, 167-189, 202-222, 255-275, 299-319, 359-379, and 380-400; these read IMIL…ITEV, VISI…AVQF, ILTV…LRSF, FVVA…SEVI, GIGN…FLIN, SNLY…FSTL, FGQA…FLTT, IFYF…YTLI, FVGS…AAAL, and GVHP…SIIN.

The protein belongs to the SecY/SEC61-alpha family. As to quaternary structure, component of the plastid Sec protein translocase complex, which is composed of at least SecY and SecE.

It localises to the plastid. It is found in the chloroplast thylakoid membrane. Its function is as follows. The central subunit of the protein translocation channel SecYE. Consists of two halves formed by TMs 1-5 and 6-10. These two domains form a lateral gate at the front which open onto the bilayer between TMs 2 and 7, and are clamped together by SecE at the back. The channel is closed by both a pore ring composed of hydrophobic SecY resides and a short helix (helix 2A) on the extracellular side of the membrane which forms a plug. In Diacronema lutheri (Unicellular marine alga), this protein is Protein translocase subunit SecY.